The following is a 444-amino-acid chain: Cadaverine/lysine antiporter (444 aa).

12 helical membrane passes run 7–27 (IGLF…GIAL), 35–55 (IGGI…SLAY), 95–115 (IGNL…FPVL), 123–143 (IACI…GTWV), 149–169 (IGLV…WHWF), 193–213 (ILLC…TGMV), 222–242 (LATM…TQVL), 273–293 (LVSA…MMLV), 323–343 (LLLA…MNSA), 354–374 (LTGI…VDLI), 384–404 (FVSL…LMGA), and 405–425 (SSFE…FYAR).

It belongs to the amino acid-polyamine-organocation (APC) superfamily. Basic amino acid/polyamine antiporter (APA) (TC 2.A.3.2) family.

It localises to the cell inner membrane. The catalysed reaction is cadaverine(in) + L-lysine(out) = cadaverine(out) + L-lysine(in). Its function is as follows. Under acidic conditions, in the presence of lysine, functions as a cadaverine:lysine antiporter that facilitates the excretion of cadaverine and the uptake of lysine. This chain is Cadaverine/lysine antiporter (cadB), found in Escherichia coli O157:H7.